A 144-amino-acid chain; its full sequence is Large ribosomal subunit protein uL15 (144 aa).

Residues 1-25 form a disordered region; it reads MFLNTIGARDGSRPEKKRVGRGIGS.

The protein belongs to the universal ribosomal protein uL15 family. As to quaternary structure, part of the 50S ribosomal subunit.

Binds to the 23S rRNA. The polypeptide is Large ribosomal subunit protein uL15 (Methylococcus capsulatus (strain ATCC 33009 / NCIMB 11132 / Bath)).